The chain runs to 475 residues: Ribulose bisphosphate carboxylase large chain (475 aa).

A propeptide spanning residues 1–2 (MS) is cleaved from the precursor. Pro3 bears the N-acetylproline mark. Lys14 bears the N6,N6,N6-trimethyllysine mark. Substrate-binding residues include Asn123 and Thr173. The active-site Proton acceptor is the Lys175. Lys177 serves as a coordination point for substrate. Mg(2+)-binding residues include Lys201, Asp203, and Glu204. Lys201 bears the N6-carboxylysine mark. Residue His294 is the Proton acceptor of the active site. Substrate-binding residues include Arg295, His327, and Ser379.

The protein belongs to the RuBisCO large chain family. Type I subfamily. Heterohexadecamer of 8 large chains and 8 small chains. Mg(2+) is required as a cofactor.

The protein resides in the plastid. The protein localises to the chloroplast. It catalyses the reaction 2 (2R)-3-phosphoglycerate + 2 H(+) = D-ribulose 1,5-bisphosphate + CO2 + H2O. The enzyme catalyses D-ribulose 1,5-bisphosphate + O2 = 2-phosphoglycolate + (2R)-3-phosphoglycerate + 2 H(+). In terms of biological role, ruBisCO catalyzes two reactions: the carboxylation of D-ribulose 1,5-bisphosphate, the primary event in carbon dioxide fixation, as well as the oxidative fragmentation of the pentose substrate in the photorespiration process. Both reactions occur simultaneously and in competition at the same active site. This chain is Ribulose bisphosphate carboxylase large chain, found in Bazzania trilobata (Greater whipwort).